The primary structure comprises 318 residues: Putative 2-hydroxyacid dehydrogenase SH0752 (318 aa).

NAD(+) contacts are provided by residues 155–156, 234–236, and aspartate 260; these read EI and AGR. Arginine 236 is an active-site residue. The active site involves glutamate 265. The Proton donor role is filled by histidine 283. 283 to 286 provides a ligand contact to NAD(+); the sequence is HIGN.

This sequence belongs to the D-isomer specific 2-hydroxyacid dehydrogenase family.

The sequence is that of Putative 2-hydroxyacid dehydrogenase SH0752 from Staphylococcus haemolyticus (strain JCSC1435).